A 217-amino-acid polypeptide reads, in one-letter code: MOB kinase activator 3A (217 aa).

Zn(2+)-binding residues include Cys83, Cys88, His165, and His170.

Belongs to the MOB1/phocein family.

Its function is as follows. May regulate the activity of kinases. The chain is MOB kinase activator 3A (MOB3A) from Bos taurus (Bovine).